Consider the following 312-residue polypeptide: tRNA uridine(34) hydroxylase (312 aa).

One can recognise a Rhodanese domain in the interval 123 to 216; the sequence is DRDDVVVLDV…YGIEQGGEDF (94 aa). Catalysis depends on C176, which acts as the Cysteine persulfide intermediate.

This sequence belongs to the TrhO family.

The catalysed reaction is uridine(34) in tRNA + AH2 + O2 = 5-hydroxyuridine(34) in tRNA + A + H2O. Its function is as follows. Catalyzes oxygen-dependent 5-hydroxyuridine (ho5U) modification at position 34 in tRNAs. The protein is tRNA uridine(34) hydroxylase of Cytophaga hutchinsonii (strain ATCC 33406 / DSM 1761 / CIP 103989 / NBRC 15051 / NCIMB 9469 / D465).